Consider the following 437-residue polypeptide: GTPase Obg (437 aa).

The region spanning 2–160 (SMFLDTAKVS…RQLELELKIL (159 aa)) is the Obg domain. The OBG-type G domain occupies 161 to 338 (ADVGLVGFPS…LLEATAELLA (178 aa)). GTP is bound by residues 167 to 174 (GFPSVGKS), 192 to 196 (FTTIV), 214 to 217 (DLPG), 284 to 287 (NKMD), and 319 to 321 (SSL). S174 and T194 together coordinate Mg(2+). An OCT domain is found at 359 to 437 (GFAAEEKAFE…IGKFEFEFVD (79 aa)).

The protein belongs to the TRAFAC class OBG-HflX-like GTPase superfamily. OBG GTPase family. As to quaternary structure, monomer. Requires Mg(2+) as cofactor.

It localises to the cytoplasm. In terms of biological role, an essential GTPase which binds GTP, GDP and possibly (p)ppGpp with moderate affinity, with high nucleotide exchange rates and a fairly low GTP hydrolysis rate. Plays a role in control of the cell cycle, stress response, ribosome biogenesis and in those bacteria that undergo differentiation, in morphogenesis control. This is GTPase Obg from Streptococcus equi subsp. equi (strain 4047).